The sequence spans 345 residues: Probable dual-specificity RNA methyltransferase RlmN (345 aa).

E93 serves as the catalytic Proton acceptor. In terms of domain architecture, Radical SAM core spans 99 to 326 (DDERATLCIS…TTIRASRGED (228 aa)). C106 and C331 are disulfide-bonded. The [4Fe-4S] cluster site is built by C113, C117, and C120. S-adenosyl-L-methionine-binding positions include 158–159 (GE), S190, 212–214 (SLH), and H288. C331 serves as the catalytic S-methylcysteine intermediate.

Belongs to the radical SAM superfamily. RlmN family. It depends on [4Fe-4S] cluster as a cofactor.

Its subcellular location is the cytoplasm. It carries out the reaction adenosine(2503) in 23S rRNA + 2 reduced [2Fe-2S]-[ferredoxin] + 2 S-adenosyl-L-methionine = 2-methyladenosine(2503) in 23S rRNA + 5'-deoxyadenosine + L-methionine + 2 oxidized [2Fe-2S]-[ferredoxin] + S-adenosyl-L-homocysteine. The catalysed reaction is adenosine(37) in tRNA + 2 reduced [2Fe-2S]-[ferredoxin] + 2 S-adenosyl-L-methionine = 2-methyladenosine(37) in tRNA + 5'-deoxyadenosine + L-methionine + 2 oxidized [2Fe-2S]-[ferredoxin] + S-adenosyl-L-homocysteine. Functionally, specifically methylates position 2 of adenine 2503 in 23S rRNA and position 2 of adenine 37 in tRNAs. This chain is Probable dual-specificity RNA methyltransferase RlmN, found in Bacteroides thetaiotaomicron (strain ATCC 29148 / DSM 2079 / JCM 5827 / CCUG 10774 / NCTC 10582 / VPI-5482 / E50).